The following is a 356-amino-acid chain: Ferrochelatase (356 aa).

Residues H214 and E295 each contribute to the Fe cation site.

This sequence belongs to the ferrochelatase family.

Its subcellular location is the cytoplasm. The catalysed reaction is heme b + 2 H(+) = protoporphyrin IX + Fe(2+). It functions in the pathway porphyrin-containing compound metabolism; protoheme biosynthesis; protoheme from protoporphyrin-IX: step 1/1. In terms of biological role, catalyzes the ferrous insertion into protoporphyrin IX. This Paraburkholderia phytofirmans (strain DSM 17436 / LMG 22146 / PsJN) (Burkholderia phytofirmans) protein is Ferrochelatase.